The chain runs to 505 residues: 2,3-bisphosphoglycerate-independent phosphoglycerate mutase (505 aa).

Asp-12 and Ser-62 together coordinate Mn(2+). Catalysis depends on Ser-62, which acts as the Phosphoserine intermediate. Residues His-123, 153–154, Arg-185, Arg-191, 257–260, and Lys-330 contribute to the substrate site; these read RD and RPDR. Residues Asp-397, His-401, Asp-438, His-439, and His-456 each contribute to the Mn(2+) site.

The protein belongs to the BPG-independent phosphoglycerate mutase family. In terms of assembly, monomer. Mn(2+) serves as cofactor.

The catalysed reaction is (2R)-2-phosphoglycerate = (2R)-3-phosphoglycerate. Its pathway is carbohydrate degradation; glycolysis; pyruvate from D-glyceraldehyde 3-phosphate: step 3/5. Catalyzes the interconversion of 2-phosphoglycerate and 3-phosphoglycerate. In Staphylococcus saprophyticus subsp. saprophyticus (strain ATCC 15305 / DSM 20229 / NCIMB 8711 / NCTC 7292 / S-41), this protein is 2,3-bisphosphoglycerate-independent phosphoglycerate mutase.